We begin with the raw amino-acid sequence, 342 residues long: MPFLLGLRQDKEACVGTNNQSYICDTGHCCGQSQCCNYYYELWWFWLVWTIIIILSCCCVCHHRRAKHRLQAQQRQHEINLIAYREAHNYSALPFYFRFLPNYLLPPYEEVVNRPPTPPPPYSAFQLQQQQLLPPQCGPAGGSPPGIDPTRGSQGAQSSPLSEPSRSSTRPPSIADPDPSDLPVDRAATKAPGMEPSGSVAGLGELDPGAFLDKDAECREELLKDDSSEHGAPDSKEKTPGRHRRFTGDSGIEVCVCNRGHHDDDLKEFNTLIDDALDGPLDFCDSCHVRPPGDEEEGLCQSSEEQAREPGHPHLPRPPACLLLNTINEQDSPNSQSSSSPS.

A helical transmembrane segment spans residues 42–62; sequence LWWFWLVWTIIIILSCCCVCH. Disordered stretches follow at residues 133-247 and 292-320; these read LPPQ…RRFT and PGDE…RPPA. A compositionally biased stretch (low complexity) spans 158 to 173; the sequence is SSPLSEPSRSSTRPPS. Serine 173 carries the phosphoserine modification. The span at 212-240 shows a compositional bias: basic and acidic residues; the sequence is LDKDAECREELLKDDSSEHGAPDSKEKTP.

Its subcellular location is the membrane. The polypeptide is WW domain binding protein 1-like (WBP1L) (Homo sapiens (Human)).